The following is a 369-amino-acid chain: tRNA-specific 2-thiouridylase MnmA (369 aa).

Residues 12–19 (GMSGGVDS) and M38 each bind ATP. The tract at residues 98-100 (NPD) is interaction with target base in tRNA. Residue C103 is the Nucleophile of the active site. Cysteines 103 and 200 form a disulfide. G128 serves as a coordination point for ATP. Residues 150–152 (KDQ) are interaction with tRNA. C200 (cysteine persulfide intermediate) is an active-site residue. The interval 312–313 (RY) is interaction with tRNA.

The protein belongs to the MnmA/TRMU family.

The protein localises to the cytoplasm. It catalyses the reaction S-sulfanyl-L-cysteinyl-[protein] + uridine(34) in tRNA + AH2 + ATP = 2-thiouridine(34) in tRNA + L-cysteinyl-[protein] + A + AMP + diphosphate + H(+). Its function is as follows. Catalyzes the 2-thiolation of uridine at the wobble position (U34) of tRNA, leading to the formation of s(2)U34. This is tRNA-specific 2-thiouridylase MnmA from Tolumonas auensis (strain DSM 9187 / NBRC 110442 / TA 4).